A 189-amino-acid chain; its full sequence is Ras-like protein 1 (189 aa).

Position 10–17 (10–17 (GAGGVGKS)) interacts with GTP. An Effector region motif is present at residues 32–40 (YDPTIEDSY). Residues 57 to 61 (DTAGQ) and 116 to 119 (NKCD) each bind GTP. Cysteine 186 is subject to Cysteine methyl ester. The S-geranylgeranyl cysteine moiety is linked to residue cysteine 186. Residues 187–189 (KML) constitute a propeptide, removed in mature form.

The protein belongs to the small GTPase superfamily. Ras family.

It localises to the cell membrane. The enzyme catalyses GTP + H2O = GDP + phosphate + H(+). Alternates between an inactive form bound to GDP and an active form bound to GTP. Activated by a guanine nucleotide-exchange factor (GEF) and inactivated by a GTPase-activating protein (GAP). Ras proteins bind GDP/GTP and possess intrinsic GTPase activity. Plays a role in eye development by regulating cell growth, survival of postmitotic ommatidial cells and differentiation of photoreceptor cells. During larval development, mediates Ptth/tor signaling leading to the production of ecdysone, a hormone required for the initiation of metamorphosis. The chain is Ras-like protein 1 from Drosophila grimshawi (Hawaiian fruit fly).